The chain runs to 306 residues: Large ribosomal subunit protein uL18 (306 aa).

Belongs to the universal ribosomal protein uL18 family. As to quaternary structure, component of the large ribosomal subunit (LSU).

The protein localises to the cytoplasm. It localises to the nucleus. In terms of biological role, component of the ribosome, a large ribonucleoprotein complex responsible for the synthesis of proteins in the cell. The small ribosomal subunit (SSU) binds messenger RNAs (mRNAs) and translates the encoded message by selecting cognate aminoacyl-transfer RNA (tRNA) molecules. The large subunit (LSU) contains the ribosomal catalytic site termed the peptidyl transferase center (PTC), which catalyzes the formation of peptide bonds, thereby polymerizing the amino acids delivered by tRNAs into a polypeptide chain. The nascent polypeptides leave the ribosome through a tunnel in the LSU and interact with protein factors that function in enzymatic processing, targeting, and the membrane insertion of nascent chains at the exit of the ribosomal tunnel. The polypeptide is Large ribosomal subunit protein uL18 (RPL5) (Theileria annulata).